Reading from the N-terminus, the 262-residue chain is Putative hydro-lyase Mflv_5194 (262 aa).

The protein belongs to the D-glutamate cyclase family.

The sequence is that of Putative hydro-lyase Mflv_5194 from Mycolicibacterium gilvum (strain PYR-GCK) (Mycobacterium gilvum (strain PYR-GCK)).